The following is a 478-amino-acid chain: MPSFNPVRFLELPIDIRKEVYFHLDGNFCGAHPYPIDILYKSNDVELPGKPSYKRSKRSKKLLRYMYPVFATYLNIFEYSPQLIEKWLEYAFWLRYDCLVLDCFKVNHLYDGTLIDALEWTYLDNELRLAYFNKASMLEVWYTFKEYKKWVIDSVAFDELDLLNVSNIQFNIDNLTPQLVDKCLSILEQKDLFATIGEVQFGQDEEVGEEKDVDVSGANSDENSSPSSTIKNKKRSASKRSHSDNGNVGATHNQLTSISVIRTIRSMESMKSLRKITVRGEKLYELLINFHGFRDNPGKTISYIVKRRINEIRLSRMNQISRTGLADFTRWDNLQKLVLSRVAYIDLNSIVFPKNFKSLTMKRVSKIKWWNIEENILKELKVDKRTFKSLYIKEDDSKFTKFFNLRHTRIKELDKSEINQITYLRCQAIVWLSFRTLNHIKLQNVSEVFNNIIVPRALFDSKRVEIYRCEKISQVLVI.

The tract at residues 206–251 (EVGEEKDVDVSGANSDENSSPSSTIKNKKRSASKRSHSDNGNVGAT) is disordered. The span at 217-230 (GANSDENSSPSSTI) shows a compositional bias: polar residues. The segment covering 231–240 (KNKKRSASKR) has biased composition (basic residues).

As to quaternary structure, component of the CBF3 copmplex, which is formed of CBF3A/CBF2, CBF3B/CEP3, CBF3C/CTF13 and CBF3D. CBF3C interacts with CBF3D and SGT1.

It is found in the nucleus. The protein localises to the chromosome. Its subcellular location is the centromere. Its function is as follows. Acts as a central component of the centromere DNA-binding protein complex CBF3, which is essential for chromosome segregation and movement of centromeres along microtubules. CBF3 is required for the recruitment of other kinetochore complexes to CEN DNA. It plays a role in the attachment of chromosomes to the spindle and binds selectively to a highly conserved DNA sequence called CDEIII, found in centromers and in several promoters. The association of CBF3C with CBF3D and SGT1 is required for CBF3C activation and CBF3 assembly. This is Centromere DNA-binding protein complex CBF3 subunit C (CTF13) from Saccharomyces cerevisiae (strain ATCC 204508 / S288c) (Baker's yeast).